Consider the following 2043-residue polypeptide: Autophagy-related protein 2 (2043 aa).

Disordered regions lie at residues Glu111–Val130, Ser288–Ser341, Ile353–Ala392, Ser413–Tyr458, Ser469–Asp488, Ala493–Pro563, Thr839–His863, and Tyr1370–Pro1400. Residues Ser288 to Pro306 are compositionally biased toward low complexity. Residues Asp308–Ser325 are compositionally biased toward polar residues. Residues Ser434–Ser447 show a composition bias toward low complexity. The segment covering Ala448–Tyr458 has biased composition (basic and acidic residues). Over residues Ala470–Leu479 the composition is skewed to polar residues. Residues Pro517–Glu527 are compositionally biased toward pro residues. Residues Gln528 to Ser546 show a composition bias toward polar residues. The segment covering Tyr1370 to Phe1392 has biased composition (acidic residues).

This sequence belongs to the ATG2 family.

It is found in the preautophagosomal structure membrane. The protein resides in the endoplasmic reticulum membrane. The catalysed reaction is a 1,2-diacyl-sn-glycero-3-phosphocholine(in) = a 1,2-diacyl-sn-glycero-3-phosphocholine(out). It catalyses the reaction a 1,2-diacyl-sn-glycero-3-phospho-L-serine(in) = a 1,2-diacyl-sn-glycero-3-phospho-L-serine(out). It carries out the reaction a 1,2-diacyl-sn-glycero-3-phosphoethanolamine(in) = a 1,2-diacyl-sn-glycero-3-phosphoethanolamine(out). Functionally, lipid transfer protein required for autophagosome completion and peroxisome degradation. Tethers the edge of the isolation membrane (IM) to the endoplasmic reticulum (ER) and mediates direct lipid transfer from ER to IM for IM expansion. ATG2 binds to the ER exit site (ERES), which is the membrane source for autophagosome formation, using basic residues in its N-terminal region (NR) and to the expanding edge of the IM through its C-terminal region. The latter binding is assisted by an ATG18-PtdIns3P interaction. ATG2 then extracts phospholipids from the membrane source using its NR and transfers them to ATG9 to the IM through its predicted beta-sheet-rich structure for membrane expansion. The polypeptide is Autophagy-related protein 2 (ATG2) (Chaetomium globosum (strain ATCC 6205 / CBS 148.51 / DSM 1962 / NBRC 6347 / NRRL 1970) (Soil fungus)).